A 418-amino-acid polypeptide reads, in one-letter code: MAGPFSRLLSARPGLKLLALAGAGSLAAGILLRPESVRAATGERRRLYPPSAEYPDLRKHNNCMASHLTPAVYARLCDKTTPTGWTLDQCIQTGVDNPGHPFIKTVGMVAGDEETYEVFAELFDPVIQERHNGYDPRTMKHTTDLDASKIRSGYFDERYVLSSRVRTGRSIRGLSLPPACTRAERREVERVVVDALSGLKGDLAGRYYRLSEMTEAEQQQLIDDHFLFDKPVSPLLTAAGMARDWPDARGIWHNNEKSFLIWVNEEDHTRVISMEKGGNMKRVFERFCRGLKKVEKLIQERGWEFMWNERLGYILTCPSNLGTGLRAGVHVKLPLLSKDSRFPKILENLRLQKRGTGGVDTPATADVFDISNLDRLGKSEVELVQLVIDGVNYLIDCERRLEKGQDIRIPPPLVHGKH.

The N-terminal 39 residues, 1-39, are a transit peptide targeting the mitochondrion; the sequence is MAGPFSRLLSARPGLKLLALAGAGSLAAGILLRPESVRA. Positions 40-64 are cardiolipin-binding; that stretch reads ATGERRRLYPPSAEYPDLRKHNNCM. One can recognise a Phosphagen kinase N-terminal domain in the interval 46–132; the sequence is RLYPPSAEYP…FDPVIQERHN (87 aa). Residue serine 152 is modified to Phosphoserine. A Phosphagen kinase C-terminal domain is found at 159–401; sequence YVLSSRVRTG…NYLIDCERRL (243 aa). 162–166 contributes to the ATP binding site; it reads SSRVR. Serine 197 is modified (phosphoserine). A Phosphothreonine modification is found at threonine 214. An ATP-binding site is contributed by histidine 225. Serine 233 is modified (phosphoserine). ATP-binding positions include arginine 270, arginine 326, 354-359, and aspartate 369; that span reads RGTGGV. Phosphothreonine is present on threonine 356.

This sequence belongs to the ATP:guanido phosphotransferase family. Exists as an octamer composed of four MTCK homodimers. As to expression, in many tissues, with highest levels in brain gut and kidney. In the kidney localized primarily in the outer medulla in the thick ascending limb and distal convoluted tubule.

The protein resides in the mitochondrion inner membrane. It catalyses the reaction creatine + ATP = N-phosphocreatine + ADP + H(+). Reversibly catalyzes the transfer of phosphate between ATP and various phosphogens (e.g. creatine phosphate). Creatine kinase isoenzymes play a central role in energy transduction in tissues with large, fluctuating energy demands, such as skeletal muscle, heart, brain and spermatozoa. The sequence is that of Creatine kinase U-type, mitochondrial (Ckmt1) from Rattus norvegicus (Rat).